An 829-amino-acid chain; its full sequence is Periplasmic nitrate reductase (829 aa).

The segment at residues 1-29 (MKMTRRAFVKANAAASAAAVAGVTLPASA) is a signal peptide (tat-type signal). One can recognise a 4Fe-4S Mo/W bis-MGD-type domain in the interval 41-97 (IKWDKAPCRFCGTGCSVLVGTQNGRVVATQGDPEAPVNKGLNCIKGYFLSKIMYGKD). Positions 48, 51, 55, and 83 each coordinate [4Fe-4S] cluster. Mo-bis(molybdopterin guanine dinucleotide) is bound by residues lysine 85, glutamine 152, asparagine 177, cysteine 181, 214-221 (WGSNMAEM), 245-249 (STYYH), 264-266 (QSD), methionine 374, glutamine 378, asparagine 484, 510-511 (SD), lysine 533, aspartate 560, and 718-727 (TGRVLEHWHT). Phenylalanine 794 provides a ligand contact to substrate. The Mo-bis(molybdopterin guanine dinucleotide) site is built by asparagine 802 and lysine 819.

The protein belongs to the prokaryotic molybdopterin-containing oxidoreductase family. NasA/NapA/NarB subfamily. In terms of assembly, component of the periplasmic nitrate reductase NapAB complex composed of NapA and NapB. [4Fe-4S] cluster is required as a cofactor. Requires Mo-bis(molybdopterin guanine dinucleotide) as cofactor. Post-translationally, predicted to be exported by the Tat system. The position of the signal peptide cleavage has not been experimentally proven.

It localises to the periplasm. It catalyses the reaction 2 Fe(II)-[cytochrome] + nitrate + 2 H(+) = 2 Fe(III)-[cytochrome] + nitrite + H2O. Functionally, catalytic subunit of the periplasmic nitrate reductase complex NapAB. Receives electrons from NapB and catalyzes the reduction of nitrate to nitrite. This chain is Periplasmic nitrate reductase, found in Aliivibrio fischeri (strain MJ11) (Vibrio fischeri).